A 206-amino-acid chain; its full sequence is Cytochrome c oxidase assembly factor 8 (206 aa).

The transit peptide at 1 to 39 directs the protein to the mitochondrion; sequence MLPCAAGARGRGAMVVLRAGKKTFLPPLCRAFACRGCQL.

The protein belongs to the COA8 family. In terms of processing, N-terminal mitochondrial targeting sequence is cleaved from the mature protein once in the mitochondrion. In normal conditions, the cytoplasmic precursor protein is rapidly degraded by the ubiquitination-proteasome system (UPS). Oxidative stress induces protein stabilization and import into mitochondria where it protects COX from degradation. Expressed in fibroblasts.

It is found in the mitochondrion inner membrane. In terms of biological role, required for cytochrome c complex (COX) IV assembly and function Protects COX assembly from oxidation-induced degradation, COX being the terminal component of the mitochondrial respiratory chain. This is Cytochrome c oxidase assembly factor 8 from Homo sapiens (Human).